The sequence spans 62 residues: Metallothionein (62 aa).

Methionine 1 is subject to N-acetylmethionine. Positions methionine 1–cysteine 30 are beta. Residues cysteine 6, cysteine 8, cysteine 14, cysteine 16, cysteine 20, cysteine 22, cysteine 25, cysteine 27, cysteine 30, cysteine 34, cysteine 35, cysteine 37, cysteine 38, cysteine 42, cysteine 45, cysteine 49, cysteine 51, cysteine 58, cysteine 60, and cysteine 61 each contribute to the a divalent metal cation site. An alpha region spans residues lysine 31 to asparagine 62.

It belongs to the metallothionein superfamily. Type 1 family.

In terms of biological role, metallothioneins have a high content of cysteine residues that bind various heavy metals. This chain is Metallothionein (mt-a), found in Xenopus laevis (African clawed frog).